The chain runs to 261 residues: Guanine nucleotide exchange factor BopE (261 aa).

It belongs to the GEF (guanine exchange factor) SopE family. As to quaternary structure, monomer. Interacts with human CDC42.

The protein localises to the secreted. In terms of biological role, activator for both CDC42 and RAC1 by directly interacting with these Rho GTPases and acting as a guanine nucleotide exchange factor (GEF). This activation results in actin cytoskeleton rearrangements and stimulates membrane ruffling, thus promoting bacterial entry into non-phagocytic cells. The protein is Guanine nucleotide exchange factor BopE (bopE) of Burkholderia mallei (strain NCTC 10247).